Consider the following 210-residue polypeptide: Chloramphenicol acetyltransferase (210 aa).

His-79 is a catalytic residue.

Belongs to the transferase hexapeptide repeat family.

The enzyme catalyses chloramphenicol + acetyl-CoA = chloramphenicol 3-acetate + CoA. In terms of biological role, this enzyme is an effector of chloramphenicol resistance in bacteria. In Escherichia coli, this protein is Chloramphenicol acetyltransferase (catB2).